The sequence spans 184 residues: Putative pre-16S rRNA nuclease (184 aa).

The interval 1–23 is disordered; sequence MFSSQHRLLYQPSGPDLSKNLDP.

Belongs to the YqgF nuclease family.

It localises to the cytoplasm. Could be a nuclease involved in processing of the 5'-end of pre-16S rRNA. This chain is Putative pre-16S rRNA nuclease, found in Mycobacterium leprae (strain Br4923).